The following is a 422-amino-acid chain: UDP-N-acetylglucosamine 1-carboxyvinyltransferase (422 aa).

A phosphoenolpyruvate-binding site is contributed by 22–23 (KN). Residue Arg94 coordinates UDP-N-acetyl-alpha-D-glucosamine. Cys118 acts as the Proton donor in catalysis. Cys118 carries the post-translational modification 2-(S-cysteinyl)pyruvic acid O-phosphothioketal. Residues 123–127 (RPVDL), Asp309, and Ile331 each bind UDP-N-acetyl-alpha-D-glucosamine.

This sequence belongs to the EPSP synthase family. MurA subfamily.

It localises to the cytoplasm. The catalysed reaction is phosphoenolpyruvate + UDP-N-acetyl-alpha-D-glucosamine = UDP-N-acetyl-3-O-(1-carboxyvinyl)-alpha-D-glucosamine + phosphate. The protein operates within cell wall biogenesis; peptidoglycan biosynthesis. Its function is as follows. Cell wall formation. Adds enolpyruvyl to UDP-N-acetylglucosamine. This Cereibacter sphaeroides (strain ATCC 17029 / ATH 2.4.9) (Rhodobacter sphaeroides) protein is UDP-N-acetylglucosamine 1-carboxyvinyltransferase.